A 1112-amino-acid chain; its full sequence is Rho GTPase-activating protein 7 (1112 aa).

Residues 37 to 104 (LAEIEAKEAC…LNKCAVMKLE (68 aa)) form the SAM domain. Residues S112, S115, and S155 each carry the phosphoserine modification. 4 disordered regions span residues 146-203 (SPKQ…APAR), 318-350 (RSIS…RTRS), 405-459 (PKAL…VSSR), and 512-574 (SDEG…GVGA). Residues 183-193 (VHSTGSLTTHA) are compositionally biased toward polar residues. The interval 296 to 468 (QLNCVEISAL…RLSIYDNVPG (173 aa)) is focal adhesion-targeting (FAT). Composition is skewed to low complexity over residues 320 to 348 (ISSS…VTRT) and 409 to 423 (SNGS…SSVN). The residue at position 343 (S343) is a Phosphoserine. A compositionally biased stretch (basic and acidic residues) spans 437–446 (LRRENSSPKE). The span at 520-532 (ALDSVSPCPSSPK) shows a compositional bias: polar residues. Basic and acidic residues predominate over residues 534–544 (IHLDVDNDRAT). Over residues 547–556 (DLDSTGNSLN) the composition is skewed to polar residues. The polybasic cluster (PBR) stretch occupies residues 635–657 (KHGFSWAVPKFMKRIKVPDYKDR). In terms of domain architecture, Rho-GAP spans 662-868 (VPLTVNVQRT…HMIAECKKLF (207 aa)). Residues 898–1105 (CNDDSADYQH…RDSFSHQNTE (208 aa)) form the START domain.

As to quaternary structure, interacts with EF1A1, facilitates EF1A1 distribution to the membrane periphery and ruffles upon growth factor stimulation and suppresses cell migration. Interacts with tensin TNS1 (via N-terminus); the interaction is decreased by phosphorylation of TNS1. Interacts with TNS3 and PTEN; in resting cells, interacts with TNS3 (via C2 tensin-type domain) but, following growth factor stimulation, TNS3 and PTEN are phosphorylated which leads to weakened interaction with TNS3 and enhanced interaction with PTEN. Interacts (via C-terminus) with tensin TNS4 (via SH2 domain); the interaction is independent of tyrosine phosphorylation of DLC1.

The protein localises to the cytoplasm. It localises to the cell junction. It is found in the focal adhesion. The protein resides in the membrane. Functionally, functions as a GTPase-activating protein for the small GTPases RHOA, RHOB, RHOC and CDC42, terminating their downstream signaling. This induces morphological changes and detachment through cytoskeletal reorganization, playing a critical role in biological processes such as cell migration and proliferation. Also functions in vivo as an activator of the phospholipase PLCD1. Active DLC1 increases cell migration velocity but reduces directionality. Required for growth factor-induced epithelial cell migration; in resting cells, interacts with TNS3 while PTEN interacts with the p85 regulatory subunit of the PI3K kinase complex but growth factor stimulation induces phosphorylation of TNS3 and PTEN, causing them to change their binding preference so that PTEN interacts with DLC1 and TNS3 interacts with p85. The PTEN-DLC1 complex translocates to the posterior of migrating cells to activate RHOA while the TNS3-p85 complex translocates to the leading edge of migrating cells to promote RAC1 activation. This is Rho GTPase-activating protein 7 (DLC1) from Bos taurus (Bovine).